The chain runs to 490 residues: Glutathione hydrolase 6 (490 aa).

The Cytoplasmic portion of the chain corresponds to 1-52 (MEPEAGPVLYQKLRVWEPSLESEEEEEEISEQLILDASGPHDSSGNKAGRLP). The chain crosses the membrane as a helical; Signal-anchor for type II membrane protein span at residues 53–73 (GAWAQLVAALLLLAIGFSLAV). Residues 74–490 (RQLCSSGASP…PSGCCPFQGF (417 aa)) lie on the Extracellular side of the membrane. N-linked (GlcNAc...) asparagine glycosylation is found at Asn160, Asn165, and Asn374.

It belongs to the gamma-glutamyltransferase family. In terms of assembly, heterodimer composed of the light and heavy chains. The active site is located in the light chain. Cleaved by autocatalysis into a large and a small subunit and the autocatalytic cleavage is essential to the functional activation of the enzyme.

The protein resides in the membrane. The enzyme catalyses an N-terminal (5-L-glutamyl)-[peptide] + an alpha-amino acid = 5-L-glutamyl amino acid + an N-terminal L-alpha-aminoacyl-[peptide]. It carries out the reaction glutathione + H2O = L-cysteinylglycine + L-glutamate. The catalysed reaction is an S-substituted glutathione + H2O = an S-substituted L-cysteinylglycine + L-glutamate. The protein operates within sulfur metabolism; glutathione metabolism. In terms of biological role, hydrolyzes and transfers gamma-glutamyl moieties from glutathione and other gamma-glutamyl compounds to acceptors. The sequence is that of Glutathione hydrolase 6 from Bos taurus (Bovine).